We begin with the raw amino-acid sequence, 224 residues long: UPF0758 protein Hhal_2301 (224 aa).

The MPN domain occupies 102–224 (TLSSPAQTRT…PVSLAERGVL (123 aa)). The Zn(2+) site is built by histidine 173, histidine 175, and aspartate 186. Residues 173–186 (HNHPSGITEPSAAD) carry the JAMM motif motif.

This sequence belongs to the UPF0758 family.

The protein is UPF0758 protein Hhal_2301 of Halorhodospira halophila (strain DSM 244 / SL1) (Ectothiorhodospira halophila (strain DSM 244 / SL1)).